The sequence spans 151 residues: 3-hydroxyacyl-[acyl-carrier-protein] dehydratase FabZ (151 aa).

The active site involves histidine 54.

Belongs to the thioester dehydratase family. FabZ subfamily. In terms of assembly, oligomer. Post-translationally, the N-terminus is blocked.

Its subcellular location is the cytoplasm. The enzyme catalyses a (3R)-hydroxyacyl-[ACP] = a (2E)-enoyl-[ACP] + H2O. In terms of biological role, involved in unsaturated fatty acids biosynthesis. Catalyzes the dehydration of short chain beta-hydroxyacyl-ACPs and long chain saturated and unsaturated beta-hydroxyacyl-ACPs. The chain is 3-hydroxyacyl-[acyl-carrier-protein] dehydratase FabZ from Escherichia coli (strain SE11).